Reading from the N-terminus, the 496-residue chain is Angiopoietin-2 (496 aa).

The N-terminal stretch at 1 to 18 (MWQIVFLTFGCDLVLASA) is a signal peptide. Residues Asn89, Asn119, Asn133, Asn151, Asn240, and Asn304 are each glycosylated (N-linked (GlcNAc...) asparagine). The stretch at 159–256 (QLLQHSISTN…QQHDLMETVN (98 aa)) forms a coiled coil. One can recognise a Fibrinogen C-terminal domain in the interval 280-496 (TFRDCAEIFK…TTMMIRPADF (217 aa)). Residues Cys284 and Cys313 are joined by a disulfide bond. 4 residues coordinate Ca(2+): Asp429, Asp431, Cys433, and Cys435. Intrachain disulfides connect Cys433/Cys435 and Cys437/Cys450.

As to quaternary structure, interacts with TEK/TIE2, competing for the same binding site as ANGPT1. Interacts with ITGA5. Interacts with SVEP1/polydom. Interacts with THBD; this interaction significantly inhibits the generation of activated PC and TAFIa/CPB2 by the thrombin/thrombomodulin complex.

The protein localises to the secreted. Functionally, binds to TEK/TIE2, competing for the ANGPT1 binding site, and modulating ANGPT1 signaling. Can induce tyrosine phosphorylation of TEK/TIE2 in the absence of ANGPT1. In the absence of angiogenic inducers, such as VEGF, ANGPT2-mediated loosening of cell-matrix contacts may induce endothelial cell apoptosis with consequent vascular regression. In concert with VEGF, it may facilitate endothelial cell migration and proliferation, thus serving as a permissive angiogenic signal. Involved in the regulation of lymphangiogenesis. The polypeptide is Angiopoietin-2 (Angpt2) (Rattus norvegicus (Rat)).